The chain runs to 123 residues: Urotensin-2 (123 aa).

Positions 1–20 are cleaved as a signal peptide; the sequence is MDRVPFCCLLFIGLLNPLLS. 2 consecutive propeptides follow at residues 21–104 and 107–109; these read LPVT…LART and QHK. Residues 57 to 88 are disordered; the sequence is RQTMGTEAGESPGEAGPSTETPTPRGSMRKAF. C117 and C122 form a disulfide bridge.

Belongs to the urotensin-2 family. In terms of tissue distribution, brain specific. Predominantly expressed in motoneurons of the brainstem and spinal cord.

The protein localises to the secreted. Highly potent vasoconstrictor. In Mus musculus (Mouse), this protein is Urotensin-2 (Uts2).